The primary structure comprises 132 residues: Small ribosomal subunit protein uS8 (132 aa).

This sequence belongs to the universal ribosomal protein uS8 family. As to quaternary structure, part of the 30S ribosomal subunit. Contacts proteins S5 and S12.

One of the primary rRNA binding proteins, it binds directly to 16S rRNA central domain where it helps coordinate assembly of the platform of the 30S subunit. The polypeptide is Small ribosomal subunit protein uS8 (Clostridium acetobutylicum (strain ATCC 824 / DSM 792 / JCM 1419 / IAM 19013 / LMG 5710 / NBRC 13948 / NRRL B-527 / VKM B-1787 / 2291 / W)).